Consider the following 62-residue polypeptide: DNA-directed RNA polymerase subunit Rpo10 (62 aa).

Zn(2+) is bound by residues Cys-6, Cys-9, Cys-43, and Cys-44.

The protein belongs to the archaeal Rpo10/eukaryotic RPB10 RNA polymerase subunit family. In terms of assembly, part of the RNA polymerase complex. It depends on Zn(2+) as a cofactor.

It localises to the cytoplasm. It carries out the reaction RNA(n) + a ribonucleoside 5'-triphosphate = RNA(n+1) + diphosphate. DNA-dependent RNA polymerase (RNAP) catalyzes the transcription of DNA into RNA using the four ribonucleoside triphosphates as substrates. In Methanosarcina mazei (strain ATCC BAA-159 / DSM 3647 / Goe1 / Go1 / JCM 11833 / OCM 88) (Methanosarcina frisia), this protein is DNA-directed RNA polymerase subunit Rpo10.